The primary structure comprises 61 residues: Large ribosomal subunit protein bL32 (61 aa).

This sequence belongs to the bacterial ribosomal protein bL32 family.

In Cytophaga hutchinsonii (strain ATCC 33406 / DSM 1761 / CIP 103989 / NBRC 15051 / NCIMB 9469 / D465), this protein is Large ribosomal subunit protein bL32.